Here is a 680-residue protein sequence, read N- to C-terminus: MANSAQTDTVSAGNLFSYDSVALSDPSTHIRLLDLHPASCYTDDLYCCIYTAPISPPPSYIALSYVWGDSTRTHEISVANEVNDGRAFIPLRLTSSLDTCLRHLRELHYRRQLEPLPLWIDQICINQDDNEEKSFQVRLMRDIYSSAHQVVVWLGPAVDDSNRVMDALAEVGQEFLDKIGDHTEEEHWLSVDRLIKEKIEQPDAVTFLREAYKVIYMLNREHSFTRWVERTWFKRLWTIQEFCLCADTIFACGYKVVSQKMVSALTDFMRCIIMDKCLRGLLETPDTPTYSTLFSGLMRLFPLFQHRGYCQYPYRKETLEHLLVELFVGVTPPCVTNKRDKVYGLLGLAGDADELGIRPDYTTSTTLAQVFTQTARAIIQKNWKIQRKRGLQILRYGSLGQRKSAPKNETDLPSWVPEWNGRIAKTYQREMSFLACGEIRMPDLVPTTSPTILGLRGFCVGTIVDLGEQARVDIWRRSADGAKKIVGFFDNFRRLLNLSKQNKRAKDIYASTAHHDAALWRVPIGDQHIIFGVGRQIAKRTDSKEDSAFQNFIAYYEDYVRRDDDWKDYMAAYQAGEEQAKLKMGKHMDRVFSEGYYMGLRHMEGKRPYLTENGYLGMGPGLLQPGDKVVVFHGDDIPYVVRPVPGKGDNTYLLMGEAYCDGIMDGELADTAEREDFYLV.

Involved in the non-self-recognition during asexual growth of N.crassa. This process involves restriction of heterokaryon formation via genetic differences at 11 het loci, including mating type. The chain is Heterokaryon incompatibility protein 6, OR allele (het-6) from Neurospora crassa (strain ATCC 24698 / 74-OR23-1A / CBS 708.71 / DSM 1257 / FGSC 987).